We begin with the raw amino-acid sequence, 1017 residues long: Protein translocase subunit SecA 1 (1017 aa).

ATP-binding positions include Q143, 161–165 (GEGKT), and D661. Positions 978–999 (GLNDDDEPLPAQPITTEQKPGR) are disordered. Zn(2+) contacts are provided by C1003, C1005, C1014, and C1015.

Belongs to the SecA family. As to quaternary structure, monomer and homodimer. Part of the essential Sec protein translocation apparatus which comprises SecA, SecYEG and auxiliary proteins SecDF. Other proteins may also be involved. Zn(2+) is required as a cofactor.

The protein resides in the cell inner membrane. The protein localises to the cytoplasm. It catalyses the reaction ATP + H2O + cellular proteinSide 1 = ADP + phosphate + cellular proteinSide 2.. Part of the Sec protein translocase complex. Interacts with the SecYEG preprotein conducting channel. Has a central role in coupling the hydrolysis of ATP to the transfer of proteins into and across the cell membrane, serving as an ATP-driven molecular motor driving the stepwise translocation of polypeptide chains across the membrane. This is Protein translocase subunit SecA 1 from Chlorobium chlorochromatii (strain CaD3).